Here is a 575-residue protein sequence, read N- to C-terminus: Urease subunit alpha (575 aa).

The 439-residue stretch at 137–575 (GGIDSHIHWI…LPMAQRYFLF (439 aa)) folds into the Urease domain. Residues histidine 142, histidine 144, and lysine 225 each coordinate Ni(2+). Lysine 225 carries the post-translational modification N6-carboxylysine. Histidine 227 contributes to the substrate binding site. Positions 254 and 280 each coordinate Ni(2+). The active-site Proton donor is histidine 328. Aspartate 368 provides a ligand contact to Ni(2+).

It belongs to the metallo-dependent hydrolases superfamily. Urease alpha subunit family. In terms of assembly, heterotrimer of UreA (gamma), UreB (beta) and UreC (alpha) subunits. Three heterotrimers associate to form the active enzyme. It depends on Ni cation as a cofactor. Post-translationally, carboxylation allows a single lysine to coordinate two nickel ions.

It is found in the cytoplasm. The enzyme catalyses urea + 2 H2O + H(+) = hydrogencarbonate + 2 NH4(+). Its pathway is nitrogen metabolism; urea degradation; CO(2) and NH(3) from urea (urease route): step 1/1. In Leptothrix cholodnii (strain ATCC 51168 / LMG 8142 / SP-6) (Leptothrix discophora (strain SP-6)), this protein is Urease subunit alpha.